The sequence spans 333 residues: MIDTTLPLTDIHRHLDGNIRPQTILELGRQYNISLPAQSLETLIPHVQVIANEPDLVSFLTKLDWGVKVLASLDACRRVAFENIEDAARNGLRYVELRFSPGYMAMAHKLPVAGVVEAVIDGVREGCRTFGVQAKLIGIMSRTFGEAACQQELEAFLAHRDQITALDLAGDELGFPGSLFLSHFNRARDAGWHITVHAGEAAGPESIWQAIRELGAERIGHGVKAIEDRALMDFLAEQQIGIESCLTSNIQTSTVAELAAHPLKTFLEHGIRASINTDDPGVQGVDIIHEYTVAAPAAGLSREQIRQAQINGLEMAFLSAEEKRALREKVAAK.

His12 and His14 together coordinate Zn(2+). Positions 14, 16, and 170 each coordinate substrate. Zn(2+) is bound at residue His197. The active-site Proton donor is the Glu200. Residue Asp278 participates in Zn(2+) binding. Position 279 (Asp279) interacts with substrate.

Belongs to the metallo-dependent hydrolases superfamily. Adenosine and AMP deaminases family. Adenosine deaminase subfamily. The cofactor is Zn(2+).

The catalysed reaction is adenosine + H2O + H(+) = inosine + NH4(+). The enzyme catalyses 2'-deoxyadenosine + H2O + H(+) = 2'-deoxyinosine + NH4(+). Its function is as follows. Catalyzes the hydrolytic deamination of adenosine and 2-deoxyadenosine. This is Adenosine deaminase from Shigella flexneri serotype 5b (strain 8401).